The chain runs to 65 residues: Conotoxin VnMLCL-041 (65 aa).

A signal peptide spans 1–19 (MLCLPVFIILLLLASPAAP). A propeptide spanning residues 20–43 (NPLQTRIQSNLIRAGPEDANIKTD) is cleaved from the precursor. The residue at position 64 (lysine 64) is a Lysine amide.

This sequence belongs to the conotoxin T superfamily. Expressed by the venom duct.

The protein resides in the secreted. The protein is Conotoxin VnMLCL-041 of Conus ventricosus (Mediterranean cone).